Here is a 485-residue protein sequence, read N- to C-terminus: BTB/POZ domain-containing protein YLR108C (485 aa).

A BTB domain is found at 26–121 (EVFKIRIGQK…LIKEYDYHFT (96 aa)).

Its subcellular location is the nucleus. The sequence is that of BTB/POZ domain-containing protein YLR108C from Saccharomyces cerevisiae (strain ATCC 204508 / S288c) (Baker's yeast).